The sequence spans 275 residues: LexA repressor (275 aa).

The disordered stretch occupies residues 1–50 (MKRSTPRPARSQAALTTSSEESPDRVERGGDGVATVTDFPDGPPDETGLT). The segment at residues 73–93 (MREIGEAVGLTSTSSVAHQLM) is a DNA-binding region (H-T-H motif). Residues 114–151 (RSAESAVPDASAGHSPAADRAPSARRPPRGPSPIDSNP) are disordered. Active-site for autocatalytic cleavage activity residues include S199 and K236.

The protein belongs to the peptidase S24 family. Homodimer.

The enzyme catalyses Hydrolysis of Ala-|-Gly bond in repressor LexA.. Its function is as follows. Represses a number of genes involved in the response to DNA damage (SOS response), including recA and lexA. In the presence of single-stranded DNA, RecA interacts with LexA causing an autocatalytic cleavage which disrupts the DNA-binding part of LexA, leading to derepression of the SOS regulon and eventually DNA repair. This chain is LexA repressor, found in Acidothermus cellulolyticus (strain ATCC 43068 / DSM 8971 / 11B).